Reading from the N-terminus, the 261-residue chain is Carbonic anhydrase 1 (261 aa).

The residue at position 2 (A2) is an N-acetylalanine. Residues 4-261 (PDWGYDGENG…LNGRTVKASF (258 aa)) form the Alpha-carbonic anhydrase domain. H65 (proton donor/acceptor) is an active-site residue. H95, H97, and H120 together coordinate Zn(2+). Substrate contacts are provided by residues T200 and 200–201 (TH).

Belongs to the alpha-carbonic anhydrase family. Requires Zn(2+) as cofactor.

The protein localises to the cytoplasm. It catalyses the reaction hydrogencarbonate + H(+) = CO2 + H2O. The enzyme catalyses urea = cyanamide + H2O. With respect to regulation, inhibited by acetazolamide. In terms of biological role, catalyzes the reversible hydration of carbon dioxide. Can hydrate cyanamide to urea. This is Carbonic anhydrase 1 (CA1) from Bos taurus (Bovine).